Consider the following 197-residue polypeptide: Putative ankyrin repeat protein R875 (197 aa).

ANK repeat units follow at residues 78–106 (LNKC…DIRE), 107–136 (NDDC…DIRA), 138–166 (DDDA…NFRK), and 168–196 (NDYE…VLHE).

The protein is Putative ankyrin repeat protein R875 of Acanthamoeba polyphaga mimivirus (APMV).